A 765-amino-acid chain; its full sequence is Kinesin-like protein KIN-14S (765 aa).

The 325-residue stretch at 132 to 456 (NIRVFCRCRP…LNFASRVRGI (325 aa)) folds into the Kinesin motor domain. Position 215–222 (215–222 (GQTGTGKT)) interacts with ATP. The stretch at 469–534 (ELLKSKQMAE…ERKTRIKQES (66 aa)) forms a coiled coil. 2 disordered regions span residues 581–613 (MPQQQPSQGHSKRFSDTTFKENNNSNRRSSSMD) and 654–678 (LRPEPSSLSSMETPSRPPPSFRGDP). A compositionally biased stretch (low complexity) spans 602-611 (NNNSNRRSSS).

It belongs to the TRAFAC class myosin-kinesin ATPase superfamily. Kinesin family. KIN-14 subfamily.

In Arabidopsis thaliana (Mouse-ear cress), this protein is Kinesin-like protein KIN-14S.